A 737-amino-acid chain; its full sequence is Procollagen-lysine,2-oxoglutarate 5-dioxygenase 2 (737 aa).

An N-terminal signal peptide occupies residues 1 to 25; the sequence is MGGCTVKPQLLLLALVLHPWNPCLG. Residues asparagine 63, asparagine 209, and asparagine 297 are each glycosylated (N-linked (GlcNAc...) asparagine). Threonine 320 is modified (phosphothreonine). Tyrosine 323 carries the phosphotyrosine modification. Asparagine 365 and asparagine 522 each carry an N-linked (GlcNAc...) asparagine glycan. A Fe2OG dioxygenase domain is found at 644–737; that stretch reads KGFALLNFVV…RYIAVSFIDP (94 aa). Residues histidine 666 and aspartate 668 each coordinate Fe cation. A glycan (N-linked (GlcNAc...) asparagine) is linked at asparagine 696. An N6-succinyllysine modification is found at lysine 704. Histidine 718 is a Fe cation binding site. The N-linked (GlcNAc...) asparagine glycan is linked to asparagine 725. Arginine 728 is an active-site residue.

In terms of assembly, homodimer. Requires Fe(2+) as cofactor. L-ascorbate serves as cofactor. As to expression, highly expressed in pancreas and muscle. Isoform 1 and isoform 2 are expressed in the majority of the examined cell types. Isoform 2 is specifically expressed in skin, lung, dura and aorta.

Its subcellular location is the rough endoplasmic reticulum membrane. It catalyses the reaction L-lysyl-[collagen] + 2-oxoglutarate + O2 = (5R)-5-hydroxy-L-lysyl-[collagen] + succinate + CO2. Its function is as follows. Forms hydroxylysine residues in -Xaa-Lys-Gly- sequences in collagens. These hydroxylysines serve as sites of attachment for carbohydrate units and are essential for the stability of the intermolecular collagen cross-links. This is Procollagen-lysine,2-oxoglutarate 5-dioxygenase 2 from Homo sapiens (Human).